Here is a 168-residue protein sequence, read N- to C-terminus: Putative peroxiredoxin prxA (168 aa).

The Thioredoxin domain occupies 4 to 158; it reads LKAGDSFPAD…LEPAKNHLEF (155 aa). The active-site Cysteine sulfenic acid (-SOH) intermediate is the cysteine 61.

The protein belongs to the peroxiredoxin family. Prx5 subfamily. Homodimer; disulfide-linked, upon oxidation. Interacts with thioredoxin trxA.

It carries out the reaction a hydroperoxide + [thioredoxin]-dithiol = an alcohol + [thioredoxin]-disulfide + H2O. In terms of biological role, thiol-specific peroxidase that catalyzes the reduction of hydrogen peroxide and organic hydroperoxides to water and alcohols, respectively. Plays a role in cell protection against oxidative stress by detoxifying peroxides and as sensor of hydrogen peroxide-mediated signaling events. Involved in osmoadaptation. The sequence is that of Putative peroxiredoxin prxA from Emericella nidulans (strain FGSC A4 / ATCC 38163 / CBS 112.46 / NRRL 194 / M139) (Aspergillus nidulans).